Reading from the N-terminus, the 406-residue chain is Pygopus homolog 2 (406 aa).

Disordered stretches follow at residues 1 to 73 and 106 to 323; these read MAAS…DHLV and VQGG…PQPP. Alanine 2 is subject to N-acetylalanine. Serine 40 bears the Phosphoserine mark. The short motif at 41–47 is the Nuclear localization signal element; that stretch reads PEKKRRK. 2 stretches are compositionally biased toward pro residues: residues 131-141 and 149-158; these read RQPPPFPPNPM and PQGPGYPPPG. Polar residues predominate over residues 164 to 179; it reads SQPFNQPLGQNFSPPS. Residues 236–252 show a composition bias toward pro residues; it reads SLPPNTSPFPGPDPGFP. Residues 285-296 show a composition bias toward polar residues; it reads NGNQPSFPPNSS. Position 302 is a phosphothreonine (threonine 302). The segment at 327-385 adopts a PHD-type zinc-finger fold; that stretch reads VYPCGACRSEVNDDQDAILCEASCQKWFHRECTGMTESAYGLLTTEASAVWACDLCLKT.

As to quaternary structure, binds to BCL9 via the PHD-type zinc finger motif, and thereby becomes part of the nuclear beta-catenin/TCF complex.

The protein resides in the nucleus. In terms of biological role, involved in signal transduction through the Wnt pathway. The polypeptide is Pygopus homolog 2 (PYGO2) (Homo sapiens (Human)).